Here is a 468-residue protein sequence, read N- to C-terminus: Siroheme synthase (468 aa).

The precorrin-2 dehydrogenase /sirohydrochlorin ferrochelatase stretch occupies residues 1–203; it reads MQYLPIFLNI…GQEEEAEGAL (203 aa). Residues 22-23 and 43-44 each bind NAD(+); these read TV and PK. At Ser-128 the chain carries Phosphoserine. The interval 216-468 is uroporphyrinogen-III C-methyltransferase; the sequence is GEVYLVGAGP…VPDREPLDAR (253 aa). Pro-225 lines the S-adenosyl-L-methionine pocket. Asp-248 (proton acceptor) is an active-site residue. Lys-270 acts as the Proton donor in catalysis. S-adenosyl-L-methionine contacts are provided by residues 301–303, Ile-306, 331–332, Met-383, and Gly-412; these read GGD and TA.

It in the N-terminal section; belongs to the precorrin-2 dehydrogenase / sirohydrochlorin ferrochelatase family. In the C-terminal section; belongs to the precorrin methyltransferase family.

The catalysed reaction is uroporphyrinogen III + 2 S-adenosyl-L-methionine = precorrin-2 + 2 S-adenosyl-L-homocysteine + H(+). It carries out the reaction precorrin-2 + NAD(+) = sirohydrochlorin + NADH + 2 H(+). The enzyme catalyses siroheme + 2 H(+) = sirohydrochlorin + Fe(2+). The protein operates within cofactor biosynthesis; adenosylcobalamin biosynthesis; precorrin-2 from uroporphyrinogen III: step 1/1. It participates in cofactor biosynthesis; adenosylcobalamin biosynthesis; sirohydrochlorin from precorrin-2: step 1/1. Its pathway is porphyrin-containing compound metabolism; siroheme biosynthesis; precorrin-2 from uroporphyrinogen III: step 1/1. It functions in the pathway porphyrin-containing compound metabolism; siroheme biosynthesis; siroheme from sirohydrochlorin: step 1/1. The protein operates within porphyrin-containing compound metabolism; siroheme biosynthesis; sirohydrochlorin from precorrin-2: step 1/1. In terms of biological role, multifunctional enzyme that catalyzes the SAM-dependent methylations of uroporphyrinogen III at position C-2 and C-7 to form precorrin-2 via precorrin-1. Then it catalyzes the NAD-dependent ring dehydrogenation of precorrin-2 to yield sirohydrochlorin. Finally, it catalyzes the ferrochelation of sirohydrochlorin to yield siroheme. The chain is Siroheme synthase from Nitrosococcus oceani (strain ATCC 19707 / BCRC 17464 / JCM 30415 / NCIMB 11848 / C-107).